Here is a 79-residue protein sequence, read N- to C-terminus: UPF0150 protein ssr1765 (79 aa).

The protein belongs to the UPF0150 family.

This chain is UPF0150 protein ssr1765, found in Synechocystis sp. (strain ATCC 27184 / PCC 6803 / Kazusa).